The following is a 209-amino-acid chain: rRNA N(6)-adenosine-methyltransferase METTL5 (209 aa).

S-adenosyl-L-methionine contacts are provided by residues Gln28, Thr31, Gly59, Cys62, Val64, Asp81, and 108–109 (DV).

This sequence belongs to the methyltransferase superfamily. PrmA family. Heterodimer; heterodimerizes with TRMT112. In terms of tissue distribution, ubiquitously expressed in brain.

The protein localises to the nucleus. It localises to the presynapse. The protein resides in the postsynapse. The catalysed reaction is adenosine(1832) in 18S rRNA + S-adenosyl-L-methionine = N(6)-methyladenosine(1832) in 18S rRNA + S-adenosyl-L-homocysteine + H(+). With respect to regulation, rRNA N6-adenosine-methyltransferase activity is inhibited by zinc. Its function is as follows. Catalytic subunit of a heterodimer with TRMT112, which specifically methylates the 6th position of adenine in position 1832 of 18S rRNA. N6-methylation of adenine(1832) in 18S rRNA resides in the decoding center of 18S rRNA and is required for translation and embryonic stem cells (ESCs) pluripotency and differentiation. The protein is rRNA N(6)-adenosine-methyltransferase METTL5 of Mus musculus (Mouse).